Reading from the N-terminus, the 704-residue chain is DNA ligase (704 aa).

NAD(+) is bound by residues 43–47, 92–93, and Glu-124; these read DADYD and SL. Lys-126 functions as the N6-AMP-lysine intermediate in the catalytic mechanism. Residues Arg-147, Glu-182, Lys-298, and Lys-322 each coordinate NAD(+). Zn(2+) contacts are provided by Cys-427, Cys-430, Cys-445, and Cys-451. The BRCT domain maps to 625–704; the sequence is PVASPVAGRI…DGWLRLIGDA (80 aa).

The protein belongs to the NAD-dependent DNA ligase family. LigA subfamily. It depends on Mg(2+) as a cofactor. Requires Mn(2+) as cofactor.

The catalysed reaction is NAD(+) + (deoxyribonucleotide)n-3'-hydroxyl + 5'-phospho-(deoxyribonucleotide)m = (deoxyribonucleotide)n+m + AMP + beta-nicotinamide D-nucleotide.. DNA ligase that catalyzes the formation of phosphodiester linkages between 5'-phosphoryl and 3'-hydroxyl groups in double-stranded DNA using NAD as a coenzyme and as the energy source for the reaction. It is essential for DNA replication and repair of damaged DNA. The chain is DNA ligase from Cereibacter sphaeroides (strain KD131 / KCTC 12085) (Rhodobacter sphaeroides).